The chain runs to 91 residues: Essential MCU regulator, mitochondrial (91 aa).

The chain crosses the membrane as a helical span at residues 45-65 (VIPFGLLGVVLTVIPGLLIGA).

The protein belongs to the SMDT1/EMRE family.

Its subcellular location is the mitochondrion inner membrane. Functionally, essential regulatory subunit of the mitochondrial calcium uniporter (mcu) channel, a protein that mediates calcium uptake into mitochondria. The chain is Essential MCU regulator, mitochondrial from Aedes aegypti (Yellowfever mosquito).